The chain runs to 297 residues: Tyrosine recombinase XerC (297 aa).

In terms of domain architecture, Core-binding (CB) spans 1-84 (MEEIQVTFLN…TLRTFYEFWM (84 aa)). Residues 105-286 (YLPQFFYEEE…SNQQLRKVYL (182 aa)) enclose the Tyr recombinase domain. Active-site residues include arginine 145, lysine 169, histidine 238, arginine 241, and histidine 264. Catalysis depends on tyrosine 273, which acts as the O-(3'-phospho-DNA)-tyrosine intermediate.

Belongs to the 'phage' integrase family. XerC subfamily. Forms a cyclic heterotetrameric complex composed of two molecules of XerC and two molecules of XerD.

It is found in the cytoplasm. Its function is as follows. Site-specific tyrosine recombinase, which acts by catalyzing the cutting and rejoining of the recombining DNA molecules. The XerC-XerD complex is essential to convert dimers of the bacterial chromosome into monomers to permit their segregation at cell division. It also contributes to the segregational stability of plasmids. The polypeptide is Tyrosine recombinase XerC (Staphylococcus haemolyticus (strain JCSC1435)).